We begin with the raw amino-acid sequence, 201 residues long: Holliday junction branch migration complex subunit RuvA (201 aa).

The segment at 1-63 is domain I; it reads MYDYIKGIVK…EDNISLFGFQ (63 aa). Residues 64–142 are domain II; it reads STEERYLFKK…DVVASEIVYK (79 aa). The interval 143-153 is flexible linker; the sequence is AAENDIVTGLS. The segment at 153–201 is domain III; that stretch reads SPQLEEAVLALEALGYSTRELKKVIPKMAKENDLTSDAYIKLALRLMTK.

This sequence belongs to the RuvA family. Homotetramer. Forms an RuvA(8)-RuvB(12)-Holliday junction (HJ) complex. HJ DNA is sandwiched between 2 RuvA tetramers; dsDNA enters through RuvA and exits via RuvB. An RuvB hexamer assembles on each DNA strand where it exits the tetramer. Each RuvB hexamer is contacted by two RuvA subunits (via domain III) on 2 adjacent RuvB subunits; this complex drives branch migration. In the full resolvosome a probable DNA-RuvA(4)-RuvB(12)-RuvC(2) complex forms which resolves the HJ.

It localises to the cytoplasm. Its function is as follows. The RuvA-RuvB-RuvC complex processes Holliday junction (HJ) DNA during genetic recombination and DNA repair, while the RuvA-RuvB complex plays an important role in the rescue of blocked DNA replication forks via replication fork reversal (RFR). RuvA specifically binds to HJ cruciform DNA, conferring on it an open structure. The RuvB hexamer acts as an ATP-dependent pump, pulling dsDNA into and through the RuvAB complex. HJ branch migration allows RuvC to scan DNA until it finds its consensus sequence, where it cleaves and resolves the cruciform DNA. In Listeria innocua serovar 6a (strain ATCC BAA-680 / CLIP 11262), this protein is Holliday junction branch migration complex subunit RuvA.